Reading from the N-terminus, the 1050-residue chain is Diacylglycerol kinase iota (1050 aa).

3 disordered regions span residues Pro-53–Ala-74, Ala-92–Glu-111, and Ser-328–Gly-356. Over residues Ala-92–Gly-105 the composition is skewed to low complexity. Over residues Ser-332 to Lys-347 the composition is skewed to basic residues. The DAGKc domain maps to Pro-367–Asn-502. ANK repeat units follow at residues Gly-943–Leu-972 and Thr-979–Gln-1008. Positions Thr-1048–Val-1050 match the PDZ-binding motif.

This sequence belongs to the eukaryotic diacylglycerol kinase family. In terms of assembly, interacts (via PDZ-binding motif) with DLG4; controls the localization of DGKI to the synapse. Interacts (via PDZ-binding motif) with DLG1. Interacts (via PDZ-binding motif) with DLG2. Interacts (via PDZ-binding motif) with DLG3. May interact with RASGRP3; involved in the regulation of RASGRP3 activity. As to expression, in brain, expressed in the hippocampus and cerebellum with stronger expression in the Purkinje cell layer (at protein level). Expressed in kidney.

The protein localises to the cell projection. The protein resides in the axon. Its subcellular location is the dendrite. It localises to the presynapse. It is found in the postsynapse. The protein localises to the postsynaptic density. The protein resides in the synaptic cell membrane. Its subcellular location is the cytoplasmic vesicle. It localises to the secretory vesicle. It is found in the synaptic vesicle membrane. The protein localises to the cytoplasm. The protein resides in the cytosol. Its subcellular location is the nucleus. The catalysed reaction is a 1,2-diacyl-sn-glycerol + ATP = a 1,2-diacyl-sn-glycero-3-phosphate + ADP + H(+). It carries out the reaction 1,2-di-(9Z-octadecenoyl)-sn-glycerol + ATP = 1,2-di-(9Z-octadecenoyl)-sn-glycero-3-phosphate + ADP + H(+). It catalyses the reaction 1-octadecanoyl-2-(5Z,8Z,11Z,14Z-eicosatetraenoyl)-sn-glycerol + ATP = 1-octadecanoyl-2-(5Z,8Z,11Z,14Z-eicosatetraenoyl)-sn-glycero-3-phosphate + ADP + H(+). The enzyme catalyses 1-octadecanoyl-2-(9Z,12Z)-octadecadienoyl-sn-glycerol + ATP = 1-octadecanoyl-2-(9Z,12Z-octadecadienoyl)-sn-glycero-3-phosphate + ADP + H(+). It participates in lipid metabolism; glycerolipid metabolism. In terms of biological role, diacylglycerol kinase that converts diacylglycerol/DAG into phosphatidic acid/phosphatidate/PA and regulates the respective levels of these two bioactive lipids. Thereby, acts as a central switch between the signaling pathways activated by these second messengers with different cellular targets and opposite effects in numerous biological processes. Has probably no preference for any of the diacylglycerols in terms of the acyl chain composition, especially for the acyl chain at the sn-2 position. By controlling the diacylglycerol/DAG-mediated activation of RASGRP3, negatively regulates the Rap1 signaling pathway. May play a role in presynaptic diacylglycerol/DAG signaling and control neurotransmitter release during metabotropic glutamate receptor-dependent long-term depression. This Mus musculus (Mouse) protein is Diacylglycerol kinase iota.